Consider the following 523-residue polypeptide: Excitatory amino acid transporter 3 (523 aa).

Residues 1-18 (MGKPTSSGCDWRRFLRNH) lie on the Cytoplasmic side of the membrane. A helical membrane pass occupies residues 19–38 (WLLLSTVAAVVLGIVLGVVV). Over 39 to 61 (RGHSELSNLDKFYFAFPGEILMR) the chain is Extracellular. A helical membrane pass occupies residues 62–82 (MLKLVILPLIVSSMITGVAAL). The Cytoplasmic portion of the chain corresponds to 83-93 (DSNVSGKIGLR). The chain crosses the membrane as a helical span at residues 94 to 114 (AVVYYFSTTVIAVILGIVLVV). The Na(+) site is built by Y98, T101, and T102. Over 115–204 (SIKPGVTQKV…KTKEYKIVGL (90 aa)) the chain is Extracellular. N-linked (GlcNAc...) asparagine glycosylation is found at N128, N178, and N194. The chain crosses the membrane as a helical span at residues 205–228 (YSDGINVLGLIIFCLVFGLVIGKM). Residues 229-237 (GEKGQILVD) are Cytoplasmic-facing. Residues 238–265 (FFNALSDATMKIVQIIMCYMPIGILFLI) form a helical membrane-spanning segment. At 266–285 (AGKIIEVEDWEIFRKLGLYM) the chain is on the extracellular side. Residues 286–307 (ATVLSGLAIHSLIVLPLLYFIV) form a helical membrane-spanning segment. Residues 308-312 (VRKNP) are Cytoplasmic-facing. Residues 313-343 (FRFALGMAQALLTALMISSSSATLPVTFRCA) constitute an intramembrane region (discontinuously helical). Positions 330 and 332 each coordinate L-aspartate. Residues 344-352 (EEKNQVDKR) are Cytoplasmic-facing. Residues 353–379 (ITRFVLPVGATINMDGTALYEAVAAVF) form a helical membrane-spanning segment. Residues G361, T363, N365, and D367 each coordinate Na(+). T369 lines the L-aspartate pocket. Topologically, residues 380-392 (IAQLNGLDLSIGQ) are extracellular. The segment at residues 393–426 (IVTISITATAASIGAAGVPQAGLVTMVIVLSAVG) is an intramembrane region (discontinuously helical). S404, I405, and A407 together coordinate Na(+). L-aspartate is bound at residue V410. At 427–439 (LPAEDVTLIIAVD) the chain is on the extracellular side. Residues 440-461 (WLLDRFRTMVNVLGDAFGTGIV) traverse the membrane as a helical segment. L-aspartate is bound by residues R446, T447, and N450. Na(+) is bound by residues N450 and D454. The Cytoplasmic portion of the chain corresponds to 462–523 (EKLSKKELEQ…TISFTQTSQF (62 aa)). Phosphoserine occurs at positions 516 and 521.

This sequence belongs to the dicarboxylate/amino acid:cation symporter (DAACS) (TC 2.A.23) family. SLC1A1 subfamily. As to quaternary structure, homotrimer. Interacts with ARL6IP5. Interacts with RTN2 (via N-terminus); the interaction promotes cell surface expression of SLC1A1. Interacts with SORCS2; this interaction is important for normal expression at the cell membrane. In terms of tissue distribution, detected on neurons in the brain cortex, dentate gyrus and hippocampus CA2 region (at protein level). Expressed in whole brain, brain cortex, hippocampus, cerebellum, lung, kidney, small intestine and skeletal muscle. Expressed in the renal outer medulla, medullary ray and cortex (at protein level).

The protein localises to the cell membrane. The protein resides in the apical cell membrane. It is found in the synapse. Its subcellular location is the synaptosome. It localises to the early endosome membrane. The protein localises to the late endosome membrane. The protein resides in the recycling endosome membrane. The enzyme catalyses K(+)(in) + L-glutamate(out) + 3 Na(+)(out) + H(+)(out) = K(+)(out) + L-glutamate(in) + 3 Na(+)(in) + H(+)(in). It catalyses the reaction K(+)(in) + L-aspartate(out) + 3 Na(+)(out) + H(+)(out) = K(+)(out) + L-aspartate(in) + 3 Na(+)(in) + H(+)(in). It carries out the reaction D-aspartate(out) + K(+)(in) + 3 Na(+)(out) + H(+)(out) = D-aspartate(in) + K(+)(out) + 3 Na(+)(in) + H(+)(in). The catalysed reaction is K(+)(in) + L-cysteine(out) + 3 Na(+)(out) + H(+)(out) = K(+)(out) + L-cysteine(in) + 3 Na(+)(in) + H(+)(in). Functionally, sodium-dependent, high-affinity amino acid transporter that mediates the uptake of L-glutamate and also L-aspartate and D-aspartate. Can also transport L-cysteine. Functions as a symporter that transports one amino acid molecule together with two or three Na(+) ions and one proton, in parallel with the counter-transport of one K(+) ion. Mediates Cl(-) flux that is not coupled to amino acid transport; this avoids the accumulation of negative charges due to aspartate and Na(+) symport. Plays an important role in L-glutamate and L-aspartate reabsorption in renal tubuli. Plays a redundant role in the rapid removal of released glutamate from the synaptic cleft, which is essential for terminating the postsynaptic action of glutamate. Contributes to glutathione biosynthesis and protection against oxidative stress via its role in L-glutamate and L-cysteine transport. Negatively regulated by ARL6IP5. This Mus musculus (Mouse) protein is Excitatory amino acid transporter 3 (Slc1a1).